Consider the following 309-residue polypeptide: Malate dehydrogenase (309 aa).

Residues 9 to 14 and D33 contribute to the NAD(+) site; that span reads GAGFVG. Residues R82 and R88 each coordinate substrate. Residues N95 and 118-120 each bind NAD(+); that span reads VNN. Substrate-binding residues include N120 and R151. H175 acts as the Proton acceptor in catalysis.

Belongs to the LDH/MDH superfamily. MDH type 3 family.

The catalysed reaction is (S)-malate + NAD(+) = oxaloacetate + NADH + H(+). In terms of biological role, catalyzes the reversible oxidation of malate to oxaloacetate. This is Malate dehydrogenase from Chloroflexus aurantiacus (strain ATCC 29364 / DSM 637 / Y-400-fl).